We begin with the raw amino-acid sequence, 110 residues long: MVLMNKKAIMKLALMLFLLGFTANVVDARFDSTSFITQVLSNGDDVKSACCDTCLCTRSQPPTCRCVDVRESCHSACDKCVCAYSNPPQCQCYDTHKFCYKACHNSEIEE.

A signal peptide spans 1-28 (MVLMNKKAIMKLALMLFLLGFTANVVDA). A propeptide spanning residues 29 to 42 (RFDSTSFITQVLSN) is cleaved from the precursor. 7 cysteine pairs are disulfide-bonded: Cys-50–Cys-103, Cys-51–Cys-66, Cys-54–Cys-99, Cys-56–Cys-64, Cys-73–Cys-80, Cys-77–Cys-92, and Cys-82–Cys-90.

Monomer.

In terms of biological role, inhibitor of trypsin and of chymotrypsin. In Lens culinaris (Lentil), this protein is Bowman-Birk type proteinase inhibitor.